The sequence spans 342 residues: Probable tyrosine--tRNA ligase, cytoplasmic (342 aa).

Position 48 (tyrosine 48) interacts with L-tyrosine. The 'HIGH' region signature appears at 53 to 61 (ITGKPHIGY). Positions 175, 179, 182, and 197 each coordinate L-tyrosine. Positions 231–235 (KMSSS) match the 'KMSKS' region motif.

Belongs to the class-I aminoacyl-tRNA synthetase family. In terms of assembly, homodimer.

The protein resides in the cytoplasm. It carries out the reaction tRNA(Tyr) + L-tyrosine + ATP = L-tyrosyl-tRNA(Tyr) + AMP + diphosphate + H(+). The chain is Probable tyrosine--tRNA ligase, cytoplasmic from Enterocytozoon bieneusi (strain H348) (Microsporidian parasite).